The sequence spans 100 residues: Large ribosomal subunit protein bL21 (100 aa).

It belongs to the bacterial ribosomal protein bL21 family. In terms of assembly, part of the 50S ribosomal subunit. Contacts protein L20.

This protein binds to 23S rRNA in the presence of protein L20. The chain is Large ribosomal subunit protein bL21 from Deinococcus deserti (strain DSM 17065 / CIP 109153 / LMG 22923 / VCD115).